A 504-amino-acid polypeptide reads, in one-letter code: Putative BTB/POZ domain-containing protein R842 (504 aa).

The region spanning serine 21–threonine 91 is the BTB domain.

It belongs to the mimivirus BTB/WD family.

This is Putative BTB/POZ domain-containing protein R842 from Acanthamoeba polyphaga (Amoeba).